The chain runs to 466 residues: Vimentin (466 aa).

Over residues 1–13 (MSTRSVSSSSYRR) the composition is skewed to low complexity. The tract at residues 1–31 (MSTRSVSSSSYRRMFGGPGTASRPSSTRSYV) is disordered. S2 carries the post-translational modification N-acetylserine. Positions 2–95 (STRSVSSSSY…FSLADAINTE (94 aa)) are head. Phosphoserine is present on S5. A Phosphoserine; by PKA and PKC; alternate modification is found at S7. O-linked (GlcNAc) serine; alternate glycosylation is present at S7. S8 carries the post-translational modification Phosphoserine. Phosphoserine; by PKC occurs at positions 9 and 10. A Phosphothreonine modification is found at T20. S25 carries the phosphoserine; by PKA and PKC modification. Residue S26 is modified to Phosphoserine; by PKC. T33 carries an O-linked (GlcNAc) threonine glycan. O-linked (GlcNAc) serine; alternate glycosylation is present at S34. A Phosphoserine; by PKC; alternate modification is found at S34. Position 39 is a phosphoserine; by CaMK2, PKA, PKC and ROCK2 (S39). S42 is subject to Phosphoserine; by PKC. S49 bears the Phosphoserine mark. Y53 bears the Phosphotyrosine mark. S55 is modified (phosphoserine). The residue at position 56 (S56) is a Phosphoserine; by CDK5 and CDK1. The residue at position 61 (Y61) is a Phosphotyrosine. S66 bears the Phosphoserine; by PKA and PKC mark. Phosphoserine; by AURKB and ROCK2 is present on S72. Residue S83 is modified to Phosphoserine; by CaMK2. S87 is subject to Phosphoserine. Residues 96-131 (FKNTRTNEKVELQELNDRFANYIDKVRFLEQQNKIL) are coil 1A. Positions 96–131 (FKNTRTNEKVELQELNDRFANYIDKVRFLEQQNKIL) form a coiled coil. The IF rod domain occupies 103-411 (EKVELQELND…KLLEGEESRI (309 aa)). Residue K104 forms a Glycyl lysine isopeptide (Lys-Gly) (interchain with G-Cter in SUMO2) linkage. Y117 carries the post-translational modification Phosphotyrosine. An N6-acetyllysine; alternate mark is found at K120, K129, and K139. An N6-succinyllysine; alternate mark is found at K120 and K129. Residues K120, K129, and K139 each participate in a glycyl lysine isopeptide (Lys-Gly) (interchain with G-Cter in SUMO2); alternate cross-link. The tract at residues 132 to 153 (LAELEQLKGQGKSRLGDLYEEE) is linker 1. S144 carries the phosphoserine modification. Residues 154–245 (MRELRRQVDQ…KLHDEEIQEL (92 aa)) are a coiled coil. Positions 154-245 (MRELRRQVDQ…KLHDEEIQEL (92 aa)) are coil 1B. N6-acetyllysine is present on K168. Residue K188 is modified to N6-acetyllysine; alternate. The residue at position 188 (K188) is an N6-succinyllysine; alternate. A Phosphoserine modification is found at S214. N6-acetyllysine; alternate is present on K223. A Glycyl lysine isopeptide (Lys-Gly) (interchain with G-Cter in SUMO2); alternate cross-link involves residue K223. S226 is modified (phosphoserine). K235 is subject to N6-acetyllysine. A linker 12 region spans residues 246 to 268 (QAQIQEQHVQIDMDVSKPDLTAA). A Glycyl lysine isopeptide (Lys-Gly) (interchain with G-Cter in SUMO2) cross-link involves residue K262. The segment at 269–407 (LRDVRQQYES…ATYRKLLEGE (139 aa)) is coil 2. N6-acetyllysine; alternate is present on K294. K294 bears the N6-succinyllysine; alternate mark. K294 participates in a covalent cross-link: Glycyl lysine isopeptide (Lys-Gly) (interchain with G-Cter in SUMO2); alternate. Residue S299 is modified to Phosphoserine. Residues 303–407 (NRNNDALRQA…ATYRKLLEGE (105 aa)) adopt a coiled-coil conformation. A Glycyl lysine isopeptide (Lys-Gly) (interchain with G-Cter in SUMO2) cross-link involves residue K313. The [IL]-x-C-x-x-[DE] motif motif lies at 326-329 (LTCE). Residue K373 is modified to N6-acetyllysine; alternate. K373 is covalently cross-linked (Glycyl lysine isopeptide (Lys-Gly) (interchain with G-Cter in SUMO2); alternate). Positions 408-466 (ESRISLPLPNFSSLNLRETNLDSLPLVDTHSKRTLLIKTVETRDGQVINETSQHHDDLE) are tail. 4 positions are modified to phosphoserine: S409, S412, S419, and S420. T426 carries the post-translational modification Phosphothreonine. S430 carries the post-translational modification Phosphoserine. T436 is subject to Phosphothreonine. Phosphoserine is present on S438. Residue K439 forms a Glycyl lysine isopeptide (Lys-Gly) (interchain with G-Cter in SUMO2) linkage. An N6-acetyllysine; alternate modification is found at K445. N6-succinyllysine; alternate is present on K445. Residue K445 forms a Glycyl lysine isopeptide (Lys-Gly) (interchain with G-Cter in SUMO2); alternate linkage. K445 participates in a covalent cross-link: Glycyl lysine isopeptide (Lys-Gly) (interchain with G-Cter in SUMO1); alternate. 2 positions are modified to phosphothreonine: T446 and T458. S459 carries the phosphoserine modification.

It belongs to the intermediate filament family. As to quaternary structure, homomer assembled from elementary dimers. Identified in complexes that contain VIM, EZR, AHNAK, BFSP1, BFSP2, ANK2, PLEC, PRX and spectrin. Interacts with BCAS3. Interacts with LGSN. Interacts with SYNM. Interacts (via rod region) with PLEC (via CH 1 domain). Interacts with STK33. Interacts with LARP6. Interacts with RAB8B. Interacts with TOR1A; the interaction associates TOR1A with the cytoskeleton. Interacts with TOR1AIP1. Interacts with TOR1AIP1. Interacts with DIAPH1. Interacts with EPPK1; interaction is dependent of higher-order structure of intermediate filament. Interacts with the non-receptor tyrosine kinase SRMS; the interaction leads to phosphorylation of VIM. Interacts with NOD2. Interacts (via head region) with CORO1C. Interacts with HDGF. Interacts with PRKCE (via phorbol-ester/DAG-type 2 domain). Interacts with BFSP2. Interacts with PPL. Interacts with PKP1 and PKP2. Interacts with SCRIB (via PDZ domains); the interaction protects SCRIB from proteasomal degradation and facilitates SCRIB localization to intermediate filaments, the interaction is reduced by cell contact inhibition. One of the most prominent phosphoproteins in various cells of mesenchymal origin. Phosphorylation is enhanced during cell division, at which time vimentin filaments are significantly reorganized. Phosphorylation by PKN1 inhibits the formation of filaments. Filament disassembly during mitosis is promoted by phosphorylation at Ser-55 as well as by nestin. Phosphorylated at Ser-56 by CDK5 during neutrophil secretion in the cytoplasm. Phosphorylated by STK33. Phosphorylated on tyrosine residues by SRMS. Post-translationally, S-nitrosylation is induced by interferon-gamma and oxidatively-modified low-densitity lipoprotein (LDL(ox)) possibly implicating the iNOS-S100A8/9 transnitrosylase complex.

The protein localises to the cytoplasm. It is found in the cytoskeleton. The protein resides in the nucleus matrix. Its subcellular location is the cell membrane. Functionally, vimentins are class-III intermediate filaments found in various non-epithelial cells, especially mesenchymal cells. Vimentin is attached to the nucleus, endoplasmic reticulum, and mitochondria, either laterally or terminally. Plays a role in cell directional movement, orientation, cell sheet organization and Golgi complex polarization at the cell migration front. Protects SCRIB from proteasomal degradation and facilitates its localization to intermediate filaments in a cell contact-mediated manner. Involved with LARP6 in the stabilization of type I collagen mRNAs for CO1A1 and CO1A2. This chain is Vimentin (VIM), found in Bos taurus (Bovine).